Here is a 222-residue protein sequence, read N- to C-terminus: MGEPSREEYKIQSFDAETQQLLKTALKDPGAVDLEKVANVIVDHSLQDCVFSKEAGRMCYAIIQAESKQAGQSVFRRGLLNRLQQEYQAREQLRARSLQGWVCYVTFICNIFDYLRVNNMPMMALVNPVYDCLFRLAQPDSLSKEEEVDCLVLQLHRVGEQLEKMNGQRMDELFVLIRDGFLLPTGLSSLAQLLLLEIIEFRAAGWKTTPAAHKYYYSEVSD.

The MIF4G domain occupies 3–205 (EPSREEYKIQ…LEIIEFRAAG (203 aa)).

The protein belongs to the MIF4GD family. As to quaternary structure, interacts with EIF4G1, EIF4G2 and SLBP; probably tethered by SLBP to the 3'-end of mRNAs ending with the histone stem-loop, it also interacts with EIF4G1 which is bound to their 5'-end.

The protein resides in the cytoplasm. The protein localises to the nucleus. Functionally, functions in replication-dependent translation of histone mRNAs which differ from other eukaryotic mRNAs in that they do not end with a poly-A tail but a stem-loop. May participate in circularizing those mRNAs specifically enhancing their translation. This Homo sapiens (Human) protein is MIF4G domain-containing protein (MIF4GD).